Here is a 425-residue protein sequence, read N- to C-terminus: O-methyltransferase AMT9 (425 aa).

Residues 257–258 (GG), aspartate 280, 306–307 (DF), arginine 322, and arginine 323 each bind S-adenosyl-L-methionine. The active-site Proton acceptor is histidine 326.

This sequence belongs to the class I-like SAM-binding methyltransferase superfamily. Cation-independent O-methyltransferase family.

The protein operates within mycotoxin biosynthesis. Functionally, O-methyltransferase; part of the gene clusters that mediate the biosynthesis of AM-toxins, host-selective toxins (HSTs) causing Alternaria blotch on apple, a worldwide distributed disease. AM-toxins are cyclic depsipeptides containing the 3 residues 2-hydroxy-isovaleric acid (2-HIV), dehydroalanine, L-alanine which are common for all 3 AM-toxins I to III. The fourth precursor is L-alpha-amino-methoxyphenyl-valeric acid (L-Amv) for AM-toxin I, L-alpha-amino-phenyl-valeric acid (L-Apv) for AM-toxin II, and L-alpha-amino-hydroxyphenyl-valeric acid (L-Ahv) for AM-toxin III. AM-toxins have two target sites for affecting susceptible apple cells; they cause invagination of the plasma membrane and electrolyte loss and chloroplast disorganization. The non-ribosomal peptide synthetase AMT1 contains 4 catalytic modules and is responsible for activation of each residue in AM-toxin. The aldo-keto reductase AMT2 catalyzes the conversion of 2-keto-isovaleric acid (2-KIV) to 2-hydroxy-isovaleric acid (2-HIV), one of the precursor residues incorporated by AMT1 during AM-toxin biosynthesis, by reduction of its ketone to an alcohol. The cytochrome P450 monooxygenase AMT3 and the thioesterase AMT4 are also important for AM-toxin production, but their exact function within the AM-toxin biosynthesis are not known yet. Up to 21 proteins (including AMT1 to AMT4) are predicted to be involved in AM-toxin biosynthesis since their expression ishighly up-regulated in AM-toxin-producing cultures. This Alternaria alternata (Alternaria rot fungus) protein is O-methyltransferase AMT9.